A 244-amino-acid polypeptide reads, in one-letter code: DNA repair protein RecO (244 aa).

Belongs to the RecO family.

Its function is as follows. Involved in DNA repair and RecF pathway recombination. The protein is DNA repair protein RecO of Koribacter versatilis (strain Ellin345).